We begin with the raw amino-acid sequence, 224 residues long: Late embryogenesis abundant protein, group 3 (224 aa).

2 disordered regions span residues 1–169 (MASN…KDKT) and 193–224 (NTLG…TRNH). Residues 13 to 23 (GETKARNEEKT) are compositionally biased toward basic and acidic residues. 5 consecutive repeat copies span residues 26–36 (VMGATKDKAGQ), 37–47 (TTEATKQKAGE), 48–58 (TTEATKQKAAE), 59–69 (TTEAAKQKASE), and 70–80 (TAEATKQKAAE). The segment at 26–153 (VMGATKDKAG…TEAAKQKASE (128 aa)) is 12 X 11 AA tandem repeats. Basic and acidic residues-rich tracts occupy residues 41-85 (TKQK…KDKT), 92-109 (AKEK…RAAQ), and 120-151 (EKTE…KQKA). One copy of the 6; truncated repeat lies at 81–87 (AKDKTAQ). A run of 5 repeats spans residues 88–98 (TAQAAKEKTYE), 99–109 (TAQSAKERAAQ), 121–131 (KTEAAKQKAAE), 132–142 (TTEAARQKAAE), and 143–153 (ATEAAKQKASE). Residues 200 to 224 (DNTITTKDNTTGATTKDTTTTTRNH) show a composition bias toward low complexity.

The protein belongs to the LEA type 4 family.

The sequence is that of Late embryogenesis abundant protein, group 3 from Triticum aestivum (Wheat).